The primary structure comprises 143 residues: Putative pre-16S rRNA nuclease (143 aa).

It belongs to the YqgF nuclease family.

The protein resides in the cytoplasm. In terms of biological role, could be a nuclease involved in processing of the 5'-end of pre-16S rRNA. The chain is Putative pre-16S rRNA nuclease from Leuconostoc mesenteroides subsp. mesenteroides (strain ATCC 8293 / DSM 20343 / BCRC 11652 / CCM 1803 / JCM 6124 / NCDO 523 / NBRC 100496 / NCIMB 8023 / NCTC 12954 / NRRL B-1118 / 37Y).